The sequence spans 422 residues: Dihydroorotase (422 aa).

The Zn(2+) site is built by H59 and H61. Residues 61-63 and N93 each bind substrate; that span reads HFR. Residues D150, H177, and H230 each coordinate Zn(2+). A substrate-binding site is contributed by N276. Position 303 (D303) interacts with Zn(2+). D303 is an active-site residue. Residue H307 participates in substrate binding.

The protein belongs to the metallo-dependent hydrolases superfamily. DHOase family. Class I DHOase subfamily. Zn(2+) is required as a cofactor.

The catalysed reaction is (S)-dihydroorotate + H2O = N-carbamoyl-L-aspartate + H(+). It functions in the pathway pyrimidine metabolism; UMP biosynthesis via de novo pathway; (S)-dihydroorotate from bicarbonate: step 3/3. Its function is as follows. Catalyzes the reversible cyclization of carbamoyl aspartate to dihydroorotate. This is Dihydroorotase from Streptococcus pyogenes serotype M3 (strain ATCC BAA-595 / MGAS315).